Reading from the N-terminus, the 510-residue chain is Inner membrane protein YeeR (510 aa).

Residue Met1 is a topological domain, cytoplasmic. A helical membrane pass occupies residues 2–22 (LQIVGALILLIAGFAILRLLF). The Periplasmic segment spans residues 23-30 (RALISTAS). The chain crosses the membrane as a helical span at residues 31–51 (ALAGLILLCLFGPALLAGYIT). Residues 52-61 (ERITRLFHIR) lie on the Cytoplasmic side of the membrane. Residues 62–82 (WLAGVFLTIAGMIISFMWGLD) traverse the membrane as a helical segment. Over 83-94 (GKHIALEAHTFD) the chain is Periplasmic. The chain crosses the membrane as a helical span at residues 95-115 (SVKFILTTALAGGLLAVPLQI). Residues 116–136 (KNIQQNGITPEDISKEINGYY) are Cytoplasmic-facing. A helical transmembrane segment spans residues 137-157 (CCFYTAFFLMACSACAPLIAL). The Periplasmic portion of the chain corresponds to 158–164 (QYDISPS). A helical transmembrane segment spans residues 165-185 (LMWWGGLLYWLAALVTLLWAA). Over 186–510 (SQIQALKKLT…KIREGKVEER (325 aa)) the chain is Cytoplasmic.

It is found in the cell inner membrane. The protein is Inner membrane protein YeeR (yeeR) of Escherichia coli (strain K12).